Consider the following 104-residue polypeptide: Meiotically up-regulated gene 150 protein (104 aa).

The next 3 membrane-spanning stretches (helical) occupy residues 30 to 50 (FFLK…KAWI), 54 to 74 (TISL…IPYF), and 84 to 104 (LLWF…SLEI).

It is found in the endoplasmic reticulum membrane. Has a role in meiosis. This is Meiotically up-regulated gene 150 protein (mug150) from Schizosaccharomyces pombe (strain 972 / ATCC 24843) (Fission yeast).